The sequence spans 132 residues: uncharacterized protein (132 aa).

Positions 1–68 (MCSAGELLRG…HTGEPVGDDY (68 aa)) are disordered. A helical membrane pass occupies residues 100-120 (VIVIFFWVMLWFLGLQALGLV).

It belongs to the FAM241 family.

The protein localises to the membrane. This is an uncharacterized protein from Homo sapiens (Human).